The chain runs to 516 residues: Probable cytosol aminopeptidase (516 aa).

Residues Lys288 and Asp293 each coordinate Mn(2+). Lys300 is a catalytic residue. Asp311, Asp370, and Glu372 together coordinate Mn(2+). The active site involves Arg374.

It belongs to the peptidase M17 family. Requires Mn(2+) as cofactor.

Its subcellular location is the cytoplasm. The enzyme catalyses Release of an N-terminal amino acid, Xaa-|-Yaa-, in which Xaa is preferably Leu, but may be other amino acids including Pro although not Arg or Lys, and Yaa may be Pro. Amino acid amides and methyl esters are also readily hydrolyzed, but rates on arylamides are exceedingly low.. It carries out the reaction Release of an N-terminal amino acid, preferentially leucine, but not glutamic or aspartic acids.. In terms of biological role, presumably involved in the processing and regular turnover of intracellular proteins. Catalyzes the removal of unsubstituted N-terminal amino acids from various peptides. This chain is Probable cytosol aminopeptidase, found in Cupriavidus taiwanensis (strain DSM 17343 / BCRC 17206 / CCUG 44338 / CIP 107171 / LMG 19424 / R1) (Ralstonia taiwanensis (strain LMG 19424)).